The chain runs to 344 residues: Lipase chaperone (344 aa).

Residues 14–34 (AAIYGGVGLAAVAGVAMWSGA) traverse the membrane as a helical segment.

Belongs to the lipase chaperone family.

It localises to the cell inner membrane. In terms of biological role, may be involved in the folding of the extracellular lipase during its passage through the periplasm. The chain is Lipase chaperone from Burkholderia cenocepacia (strain ATCC BAA-245 / DSM 16553 / LMG 16656 / NCTC 13227 / J2315 / CF5610) (Burkholderia cepacia (strain J2315)).